A 686-amino-acid polypeptide reads, in one-letter code: Methionine--tRNA ligase (686 aa).

A 'HIGH' region motif is present at residues 15–25; it reads PYANGSIHLGH. Residues C146, C149, C159, and C162 each contribute to the Zn(2+) site. A 'KMSKS' region motif is present at residues 332-336; sequence KMSKS. Position 335 (K335) interacts with ATP. Residues 585 to 686 form the tRNA-binding domain; sequence AFEAVDMRIA…EGAQPGMRVM (102 aa).

The protein belongs to the class-I aminoacyl-tRNA synthetase family. MetG type 1 subfamily. Homodimer. The cofactor is Zn(2+).

It localises to the cytoplasm. The enzyme catalyses tRNA(Met) + L-methionine + ATP = L-methionyl-tRNA(Met) + AMP + diphosphate. In terms of biological role, is required not only for elongation of protein synthesis but also for the initiation of all mRNA translation through initiator tRNA(fMet) aminoacylation. This is Methionine--tRNA ligase from Aliivibrio fischeri (strain MJ11) (Vibrio fischeri).